Reading from the N-terminus, the 470-residue chain is Putative dipeptidase TSTA_079200 (470 aa).

The chain crosses the membrane as a helical span at residues 40 to 60 (AWLFGLGTLGIILASVLLNPF). Histidine 92 and aspartate 94 together coordinate Zn(2+). An intrachain disulfide couples cysteine 143 to cysteine 237. An N-linked (GlcNAc...) asparagine glycan is attached at asparagine 188. Residue glutamate 208 participates in Zn(2+) binding. Position 235 (histidine 235) interacts with substrate. Zn(2+) is bound by residues histidine 279 and histidine 300. 2 residues coordinate substrate: arginine 311 and aspartate 371.

This sequence belongs to the metallo-dependent hydrolases superfamily. Peptidase M19 family. Zn(2+) is required as a cofactor.

It localises to the membrane. It carries out the reaction an L-aminoacyl-L-amino acid + H2O = 2 an L-alpha-amino acid. In terms of biological role, hydrolyzes a wide range of dipeptides. The protein is Putative dipeptidase TSTA_079200 of Talaromyces stipitatus (strain ATCC 10500 / CBS 375.48 / QM 6759 / NRRL 1006) (Penicillium stipitatum).